Here is a 747-residue protein sequence, read N- to C-terminus: Anoctamin-9 (747 aa).

The Cytoplasmic segment spans residues 1 to 193 (MQDDESSQIF…LYFTWLGWYT (193 aa)). Residues 194–214 (YMLVPAAVVGLIVFLSGFALF) form a helical membrane-spanning segment. Over 215–259 (DSSQISKEICSANDIFMCPLGDHSHRYLRLSEMCTFAKLTHLFDN) the chain is Extracellular. Position 245 is a phosphoserine; by PKA (Ser245). The helical transmembrane segment at 260 to 280 (EGTVLFAIFMALWATVFLEIW) threads the bilayer. Residues 281 to 326 (KRKRAHEVQSWKLYEWDEEEEEMALELINSPHYKLKDHRHSYLSST) are Cytoplasmic-facing. The helical transmembrane segment at 327 to 347 (IILILSLFMICLMIGMAHVLV) threads the bilayer. Residues 348-364 (VYRVLAGALFSSLVKQQ) lie on the Extracellular side of the membrane. The helical transmembrane segment at 365–385 (VTTAVVVTGAVVHYIIIVIMT) threads the bilayer. Residues 386 to 414 (KVNKYVALKLCKFEESGTFSEQERKFTVK) are Cytoplasmic-facing. A helical transmembrane segment spans residues 415–435 (FFILQFFAHFSSLIYIAFILG). Residues 436–543 (RINGHPGKST…EMMIQYGFTT (108 aa)) are Extracellular-facing. A helical membrane pass occupies residues 544–564 (IFVAAFPLAPLLALFSNLVEI). At 565-595 (RLDAIKMVRLQRRLVPRKAKDIGTWLQVLET) the chain is on the cytoplasmic side. Residues 596 to 616 (IGVLAVIANGMVIAFTSEFIP) traverse the membrane as a helical segment. At 617–695 (RVVYKYHYGP…FWFILAIRLT (79 aa)) the chain is on the extracellular side. N-linked (GlcNAc...) asparagine glycosylation is found at Asn630, Asn643, Asn665, and Asn681. Residues 696–716 (FVILFEHFALCIKLIAAWFVP) traverse the membrane as a helical segment. The Cytoplasmic portion of the chain corresponds to 717–747 (DVPQKVKNEVLQEKYDRIRHRMRFSSRSTDV).

The protein belongs to the anoctamin family. Post-translationally, phosphorylation on Ser-245 by cAMP-dependent protein kinase A (PKA)is essential for activation of its cation channel activity. Highly expressed in the olfactory epithelium, particularly in mature olfactory sensory neurons (at protein level). Expressed in the kidney (at protein level). Predominant expression seen in epithelial tissues. Highly expressed in the small intestine, colon and stomach.

Its subcellular location is the cell membrane. The protein localises to the endoplasmic reticulum. It carries out the reaction a 1,2-diacyl-sn-glycero-3-phospho-L-serine(in) = a 1,2-diacyl-sn-glycero-3-phospho-L-serine(out). The enzyme catalyses a beta-D-galactosyl-(1&lt;-&gt;1')-N-acylsphing-4-enine(out) = a beta-D-galactosyl-(1&lt;-&gt;1')-N-acylsphing-4-enine(in). It catalyses the reaction a 1,2-diacyl-sn-glycero-3-phosphocholine(in) = a 1,2-diacyl-sn-glycero-3-phosphocholine(out). The catalysed reaction is Ca(2+)(in) = Ca(2+)(out). It carries out the reaction Na(+)(in) = Na(+)(out). The enzyme catalyses K(+)(in) = K(+)(out). Its activity is regulated as follows. Cation channel activity is activated via phosphorylation on Ser-245 by cAMP-dependent protein kinase A (PKA). Inhibited by NaCl. Functionally, PKA-activated nonselective cation channel. Discriminates poorly among cations but is more permeable to Ca(2+) ions than to monovalent cations. Acts as a calcium-activated calcium permeable channel which may operate as a endoplasmic reticulum (ER) Ca(2+)-leak channel, reducing the loading of the ER Ca(2+) store. Regulates intracellular Ca2+ signals, ion channel activity, and cytokine release in the renal tissue. Plays an important role in olfaction, amplifying cAMP-evoked cyclic nucleotide-gated (CNG) channel currents in the olfactory sensory neurons. Has calcium-dependent phospholipid scramblase activity; scrambles phosphatidylserine, phosphatidylcholine and galactosylceramide. Does not exhibit calcium-activated chloride channel (CaCC) activity. Can inhibit the activity of ANO1. The protein is Anoctamin-9 of Mus musculus (Mouse).